The following is a 158-amino-acid chain: MLLLDCNPEVDGLKHLLETGASVNAPPDPCKQSPVHLAAGSGLACFLLWQLQTGADLNQQDVLGEAPLHKAAKVGSLECLSLLVASDAQIDLCNKNGQTAEDLAWSCGFPDCAKFLTTIKCMQTIKASEHPDRNDCVAVLRQKRSLGSVENTSGKRKC.

ANK repeat units lie at residues 1–25 (MLLLDCNPEVDGLKHLLETGASVNA), 30–59 (CKQSPVHLAAGSGLACFLLWQLQTGADLNQ), and 63–92 (LGEAPLHKAAKVGSLECLSLLVASDAQIDL). The Nuclear localization signal motif lies at 129-149 (EHPDRNDCVAVLRQKRSLGSV).

In terms of processing, ubiquitinated by the CRL2(FEM1B) complex, leading to its degradation. Mainly expressed in testis, small intestine, colon, blood leukocytes and in pancreatic adenocarcinoma cells.

It is found in the nucleus. It localises to the cytoplasm. This chain is Ankyrin repeat domain-containing protein 37, found in Homo sapiens (Human).